A 117-amino-acid polypeptide reads, in one-letter code: U9-theraphotoxin-Hhn1a (117 aa).

Residues 1 to 21 (MNTVRVTFLLVFVLAVSLGQA) form the signal peptide. A propeptide spanning residues 22–75 (DEDGNRMEMRQEIEKTEADSSYFAENLLLQKLEELEAKLWEETSEESRNSRQKR) is cleaved from the precursor. Disulfide bonds link Cys-76–Cys-94, Cys-83–Cys-99, and Cys-93–Cys-114.

The protein belongs to the neurotoxin 14 (magi-1) family. 01 (HNTX-16) subfamily. In terms of tissue distribution, expressed by the venom gland.

It is found in the secreted. In terms of biological role, probable ion channel inhibitor. This Cyriopagopus hainanus (Chinese bird spider) protein is U9-theraphotoxin-Hhn1a.